A 209-amino-acid polypeptide reads, in one-letter code: Protein GrpE (209 aa).

A compositionally biased stretch (polar residues) spans 1 to 13 (MSNDSSKAKQNQV). Residues 1–33 (MSNDSSKAKQNQVDEAVEGEILTESEVETGNDE) are disordered. The segment covering 15–31 (EAVEGEILTESEVETGN) has biased composition (acidic residues).

It belongs to the GrpE family. Homodimer.

It localises to the cytoplasm. Functionally, participates actively in the response to hyperosmotic and heat shock by preventing the aggregation of stress-denatured proteins, in association with DnaK and GrpE. It is the nucleotide exchange factor for DnaK and may function as a thermosensor. Unfolded proteins bind initially to DnaJ; upon interaction with the DnaJ-bound protein, DnaK hydrolyzes its bound ATP, resulting in the formation of a stable complex. GrpE releases ADP from DnaK; ATP binding to DnaK triggers the release of the substrate protein, thus completing the reaction cycle. Several rounds of ATP-dependent interactions between DnaJ, DnaK and GrpE are required for fully efficient folding. In Shewanella woodyi (strain ATCC 51908 / MS32), this protein is Protein GrpE.